The following is a 439-amino-acid chain: Prenyltransferase iacE (439 aa).

Residues 88-89 (WI), glutamate 97, arginine 112, lysine 198, tyrosine 200, arginine 271, lysine 273, and tyrosine 275 contribute to the substrate site.

The protein belongs to the tryptophan dimethylallyltransferase family.

It carries out the reaction siccayne + dimethylallyl diphosphate = pestalodiol + diphosphate. It participates in secondary metabolite biosynthesis. Its function is as follows. Prenyltransferase; part of the gene cluster that mediates the biosynthesis of iso-A82775C, a enylepoxycyclohexane and biosynthetic precursor of the chloropestolide anticancer natural products. Within the cluster, the prenyltransferase iacE prenylates siccayne to generate pestalodiol E, using dimethylallyl diphosphate (DMAPP) as cosubstrate. The probable oxidoreductase iacF is then involved in the epoxidation of pestalodiol F to pestalodiol F, which is further converted to pestalofone A by the short-chain dehydrogenase/reductase iacG. Iso-A82775C is subsequently generated from pestalofone A by the short-chain dehydrogenase/reductase iacC. Iso-A82775C is further condensed with maldoxin via a Diels-Alder reaction to produce the anticancer natural products chloropestolides A to E. The protein is Prenyltransferase iacE of Pestalotiopsis fici (strain W106-1 / CGMCC3.15140).